We begin with the raw amino-acid sequence, 114 residues long: NADH-quinone oxidoreductase subunit K 2 (114 aa).

Transmembrane regions (helical) follow at residues 1–21, 29–49, and 62–82; these read MIVP…LGVF, LIMI…AFIG, and FVLF…AIIV.

This sequence belongs to the complex I subunit 4L family. As to quaternary structure, NDH-1 is composed of 14 different subunits. Subunits NuoA, H, J, K, L, M, N constitute the membrane sector of the complex.

The protein localises to the cell inner membrane. The enzyme catalyses a quinone + NADH + 5 H(+)(in) = a quinol + NAD(+) + 4 H(+)(out). Functionally, NDH-1 shuttles electrons from NADH, via FMN and iron-sulfur (Fe-S) centers, to quinones in the respiratory chain. The immediate electron acceptor for the enzyme in this species is believed to be ubiquinone. Couples the redox reaction to proton translocation (for every two electrons transferred, four hydrogen ions are translocated across the cytoplasmic membrane), and thus conserves the redox energy in a proton gradient. The protein is NADH-quinone oxidoreductase subunit K 2 of Syntrophobacter fumaroxidans (strain DSM 10017 / MPOB).